Here is a 425-residue protein sequence, read N- to C-terminus: Probable isoprenylcysteine alpha-carbonyl methylesterase ICMEL1 (425 aa).

Positions 1–10 (MQVELADRAA) are enriched in basic and acidic residues. Residues 1-42 (MQVELADRAAARPSETGEAPPSSPAAAAAASAAAEDAPLLPG) are disordered. The span at 24–34 (PAAAAAASAAA) shows a compositional bias: low complexity. 2 helical membrane-spanning segments follow: residues 99 to 119 (FLAL…VVYY) and 154 to 174 (VVAF…GALL). Substrate-binding positions include 160 to 162 (GGA) and 231 to 233 (QSA). Catalysis depends on residues serine 232, aspartate 334, and histidine 366.

This sequence belongs to the AB hydrolase superfamily. Isoprenylcysteine methylesterase family.

Its subcellular location is the endoplasmic reticulum membrane. The protein resides in the golgi apparatus membrane. The enzyme catalyses [protein]-C-terminal S-[(2E,6E)-farnesyl]-L-cysteine methyl ester + H2O = [protein]-C-terminal S-[(2E,6E)-farnesyl]-L-cysteine + methanol + H(+). In terms of biological role, catalyzes the demethylation of isoprenylcysteine methylesters. In Oryza sativa subsp. japonica (Rice), this protein is Probable isoprenylcysteine alpha-carbonyl methylesterase ICMEL1 (IMCEL1).